The chain runs to 84 residues: Replication regulatory protein repA2 (84 aa).

Over residues 1–13 (MSQTENAVTSSSG) the composition is skewed to polar residues. A disordered region spans residues 1-31 (MSQTENAVTSSSGAKRAYRKGNPLSDAEKQR).

In terms of biological role, this protein is involved in the determination of copy number in gene replication. It binds to the repA promoter thus inhibiting the synthesis of the mRNA for the initiator protein RepA. This chain is Replication regulatory protein repA2 (repA2), found in Escherichia coli.